Reading from the N-terminus, the 1494-residue chain is B-cell CLL/lymphoma 9-like protein (1494 aa).

Disordered stretches follow at residues 1–236 (MRIL…PPSQ) and 269–496 (VPRA…DMGQ). Positions 20-37 (GSPPLSPRGHCPPAPAKP) are enriched in pro residues. Ser21 and Ser25 each carry phosphoserine. The residue at position 36 (Lys36) is an N6-acetyllysine. Composition is skewed to polar residues over residues 45 to 70 (TNHG…TCNL) and 85 to 96 (NQISPSNSSLKN). Ser88 carries the post-translational modification Phosphoserine. Lys108 and Lys110 each carry N6-acetyllysine. 2 stretches are compositionally biased toward basic and acidic residues: residues 114–126 (ERSV…EQRE) and 134–153 (SEAK…ERKQ). Phosphoserine occurs at positions 116 and 118. Lys137 is modified (N6-acetyllysine). Polar residues predominate over residues 193–207 (PGQTAQLPLSESSAP). Pro residues-rich tracts occupy residues 279–289 (KVPPTPEPLPL) and 299–322 (SQPP…PPEG). The segment at 302-530 (PPLPPPPPAP…QEEYYEEKRR (229 aa)) is necessary for interaction with CTNNB1. Positions 348 to 360 (THPNTPTAATANN) are enriched in low complexity. Residues 396–418 (LSKEQLEHRERSLQTLRDIERLL) show a composition bias toward basic and acidic residues. Ser421 carries the phosphoserine modification. Thr511 carries the post-translational modification Phosphothreonine. The residue at position 677 (Arg677) is an Asymmetric dimethylarginine. Phosphoserine is present on residues Ser747, Ser810, Ser912, Ser923, Ser935, Ser939, Ser944, Ser972, Ser984, Ser988, Ser994, Ser1001, Ser1007, and Ser1014. 2 disordered regions span residues 905–1082 (RGLG…NPLS) and 1113–1206 (ELLP…PGGP). Polar residues predominate over residues 932–957 (PTLSQVHSPLVTSPSANLKSPQTPSQ). Residues 974–993 (QVLSSSLGVRSPTGSPSRLK) show a composition bias toward polar residues. The segment covering 1016–1035 (GVSQNKQPPLSINSSSTLGN) has biased composition (polar residues). Residues 1046–1059 (PRNSSSAPPANPSS) show a composition bias toward low complexity. Polar residues predominate over residues 1060–1082 (GLMNPSLPFTSSPDPTPSQNPLS). The segment covering 1119–1129 (PLLPPPPPPQG) has biased composition (pro residues). Polar residues predominate over residues 1133–1143 (GISNNQPNQMH). Over residues 1165–1176 (HEPPPTMLPSPT) the composition is skewed to pro residues. Lys1339 participates in a covalent cross-link: Glycyl lysine isopeptide (Lys-Gly) (interchain with G-Cter in SUMO2).

This sequence belongs to the BCL9 family. Found in a complex with CDC73; CTNNB1 and PYGO1. Interacts with CTNNB1. Expressed in kidney, liver, lung, testis, brain, spleen, heart and skeletal muscle. Highly expressed in numerous colorectal tumors compared to corresponding non-cancerous tissues.

The protein localises to the nucleus. In terms of biological role, transcriptional regulator that acts as an activator. Promotes beta-catenin transcriptional activity. Plays a role in tumorigenesis. Enhances the neoplastic transforming activity of CTNNB1. In Mus musculus (Mouse), this protein is B-cell CLL/lymphoma 9-like protein (Bcl9l).